Reading from the N-terminus, the 1025-residue chain is Multidrug resistance protein MdtC (1025 aa).

12 helical membrane passes run 3 to 23, 333 to 353, 360 to 380, 387 to 407, 431 to 451, 463 to 483, 528 to 548, 853 to 873, 875 to 895, 897 to 917, 953 to 973, and 984 to 1004; these read FFALFIYRPVATILLSVAITL, EVEQTLIISVALVILVVFLFL, IIPAVSVPVSLIGTFAAMYLC, LSLMALTIATGFVVDDAIVVL, VGFTVLSMSLSLVAVFLPLLL, FAVTLSVAIGISLLVSLTLTP, LVGVVLLGTIALNIWLYISIP, VILIIAAIATVYIVLGILYES, VHPLTILSTLPSAGVGALLAL, LFNAPFSLIALIGIMLLIGIV, PIMMTTLAALFGALPLVLSGG, and ITIVGGLVMSQLLTLYTTPVV.

Belongs to the resistance-nodulation-cell division (RND) (TC 2.A.6) family. MdtC subfamily. In terms of assembly, part of a tripartite efflux system composed of MdtA, MdtB and MdtC. MdtC forms a heteromultimer with MdtB.

Its subcellular location is the cell inner membrane. The MdtABC tripartite complex confers resistance against novobiocin and deoxycholate. The polypeptide is Multidrug resistance protein MdtC (Escherichia coli (strain K12 / MC4100 / BW2952)).